Here is a 277-residue protein sequence, read N- to C-terminus: MSLPEHSPLGKPSAYKTEYDASLLFPIPRQPKRTEIGLPEGKPVPFFGVDIWNAYELSWLNLKGKPQVALATFIIPSDTPNIVESKSFKLYLNSFNQTRIASPEALQQLLHHDLSEATGGTVQVRLVTEADLGKQQMGELDGLLLDRLDIEVDRYEPAPELLFADQDETPVEETLVSHLLKSNCLVTGQPDWGSVQIRYVGAPINQEALLKYLISFRNHNEFHEQCVERIFMDVMRQCKPVKLAVYARYTRRGGLDINPFRTNFNTAWPDNKRNARQ.

Substrate is bound at residue 83–85 (VES). 85–86 (SK) is a binding site for NADPH. Catalysis depends on Cys184, which acts as the Thioimide intermediate. Asp191 acts as the Proton donor in catalysis. 223–224 (HE) is a binding site for substrate. Residue 252-253 (RG) coordinates NADPH.

It belongs to the GTP cyclohydrolase I family. QueF type 2 subfamily. Homodimer.

The protein localises to the cytoplasm. It catalyses the reaction 7-aminomethyl-7-carbaguanine + 2 NADP(+) = 7-cyano-7-deazaguanine + 2 NADPH + 3 H(+). The protein operates within tRNA modification; tRNA-queuosine biosynthesis. Its function is as follows. Catalyzes the NADPH-dependent reduction of 7-cyano-7-deazaguanine (preQ0) to 7-aminomethyl-7-deazaguanine (preQ1). The protein is NADPH-dependent 7-cyano-7-deazaguanine reductase of Cupriavidus taiwanensis (strain DSM 17343 / BCRC 17206 / CCUG 44338 / CIP 107171 / LMG 19424 / R1) (Ralstonia taiwanensis (strain LMG 19424)).